We begin with the raw amino-acid sequence, 105 residues long: UPF0060 membrane protein Reut_B3679 (105 aa).

The next 4 helical transmembrane spans lie at 4 to 24 (IALY…PYLW), 28 to 48 (GASA…AWLL), 60 to 80 (AAYG…VDGV), and 82 to 102 (PSAW…IIVF).

This sequence belongs to the UPF0060 family.

It is found in the cell inner membrane. The chain is UPF0060 membrane protein Reut_B3679 from Cupriavidus pinatubonensis (strain JMP 134 / LMG 1197) (Cupriavidus necator (strain JMP 134)).